The chain runs to 693 residues: Cleavage and polyadenylation specificity factor subunit 3-I (693 aa).

An HXHXDH motif motif is present at residues 81–86 (HFHIDH).

It belongs to the metallo-beta-lactamase superfamily. RNA-metabolizing metallo-beta-lactamase-like family. INTS11 subfamily. In terms of assembly, component of the CPSF complex, at least composed of CPSF160, CPSF100, CPSF73-I, CPSF73-II, CPSF30, FY and FIPS5. Interacts with CLPS3, CPSF100, CPSF160 and FY. As to expression, highly expressed in carpels. Also detected in seedlings, roots, stems, leaves, flowers and siliques.

It localises to the nucleus. Its function is as follows. Component of the cleavage and polyadenylation specificity factor (CPSF) complex that play a key role in pre-mRNA 3'-end formation, recognizing the AAUAAA signal sequence and interacting with poly(A) polymerase and other factors to bring about cleavage and poly(A) addition. May function as mRNA 3'-end-processing endonuclease and also be involved in the histone 3'-end pre-mRNA processing. The polypeptide is Cleavage and polyadenylation specificity factor subunit 3-I (CPSF73-I) (Arabidopsis thaliana (Mouse-ear cress)).